The primary structure comprises 206 residues: Ribosomal RNA small subunit methyltransferase G (206 aa).

S-adenosyl-L-methionine is bound by residues Gly74, Leu79, 125 to 126, and Arg140; that span reads VE.

It belongs to the methyltransferase superfamily. RNA methyltransferase RsmG family.

It localises to the cytoplasm. It catalyses the reaction guanosine(527) in 16S rRNA + S-adenosyl-L-methionine = N(7)-methylguanosine(527) in 16S rRNA + S-adenosyl-L-homocysteine. Functionally, specifically methylates the N7 position of guanine in position 527 of 16S rRNA. This Shewanella baltica (strain OS223) protein is Ribosomal RNA small subunit methyltransferase G.